The sequence spans 892 residues: Phenylalanine--tRNA ligase beta subunit (892 aa).

One can recognise a tRNA-binding domain in the interval 39–150 (NPGVEGVVVG…PGLEPGMDVA (112 aa)). One can recognise a B5 domain in the interval 406-569 (AVPPVILLRT…RCEGYDAIPL (164 aa)). Residues 442-518 (VLTPADLAAD…ALLGGGESDG (77 aa)) form an insert region. Mg(2+) is bound by residues Asp547, Asp553, Glu556, and Glu557. The region spanning 799–891 (PRFPAVTRDV…ALKALGAELR (93 aa)) is the FDX-ACB domain.

It belongs to the phenylalanyl-tRNA synthetase beta subunit family. Type 1 subfamily. Tetramer of two alpha and two beta subunits. Mg(2+) is required as a cofactor.

It localises to the cytoplasm. It catalyses the reaction tRNA(Phe) + L-phenylalanine + ATP = L-phenylalanyl-tRNA(Phe) + AMP + diphosphate + H(+). This Symbiobacterium thermophilum (strain DSM 24528 / JCM 14929 / IAM 14863 / T) protein is Phenylalanine--tRNA ligase beta subunit.